Here is a 115-residue protein sequence, read N- to C-terminus: U3-lycotoxin-Ls1p (115 aa).

An N-terminal signal peptide occupies residues 1–20 (MKFVLLFGVLLVTLFSYSSA). Residues 21–44 (EMFDDFDQADEDELLSLIEKEEAR) constitute a propeptide that is removed on maturation. Cystine bridges form between cysteine 48/cysteine 63, cysteine 55/cysteine 72, cysteine 62/cysteine 87, and cysteine 74/cysteine 85.

This sequence belongs to the neurotoxin 19 (CSTX) family. 01 subfamily. In terms of tissue distribution, expressed by the venom gland.

Its subcellular location is the secreted. The chain is U3-lycotoxin-Ls1p from Lycosa singoriensis (Wolf spider).